The primary structure comprises 477 residues: Kinesin-like protein KIN-1 (477 aa).

The Kinesin motor domain occupies 3-330; that stretch reads NVTVCVRFRP…VRFGTRTKLI (328 aa). 86–93 contributes to the ATP binding site; sequence GQTGAGKT. Residues 402 to 451 adopt a coiled-coil conformation; sequence QDAASQEVSLLTQAVEELKETVEELTDENERLRGELELAQEAAAAAAAAR.

This sequence belongs to the TRAFAC class myosin-kinesin ATPase superfamily. Kinesin family. KIN-1 subfamily. Widely expressed. Expressed in young roots and leaves, in mature roots, culm, sheath and leaves, and in panicles at various developmental stages. Strongest expression is detected in panicles. In the panicle, expression is detected in anthers, glumme, lemma and palea. In the spikelet, expression is detected in both microsporocyte and the anther walls.

Its subcellular location is the cytoplasm. In terms of biological role, kinesin-like motor protein that exhibits microtubule-stimulated ATPase activity. Plays an essential role in male meiotic chromosomal dynamics, male gametogenesis and anther dehiscence. May play a minor and nonessential role in regulating meiotic spindle formation. The polypeptide is Kinesin-like protein KIN-1 (Oryza sativa subsp. japonica (Rice)).